Here is a 122-residue protein sequence, read N- to C-terminus: Large ribosomal subunit protein uL14c (122 aa).

It belongs to the universal ribosomal protein uL14 family. Part of the 50S ribosomal subunit.

It is found in the plastid. Its subcellular location is the chloroplast. Its function is as follows. Binds to 23S rRNA. In Jasminum nudiflorum (Winter jasmine), this protein is Large ribosomal subunit protein uL14c.